Here is a 28-residue protein sequence, read N- to C-terminus: Chaperonin GroEL (28 aa).

This sequence belongs to the chaperonin (HSP60) family. As to quaternary structure, forms a cylinder of 14 subunits composed of two heptameric rings stacked back-to-back. Interacts with the co-chaperonin GroES.

It is found in the cytoplasm. The catalysed reaction is ATP + H2O + a folded polypeptide = ADP + phosphate + an unfolded polypeptide.. Together with its co-chaperonin GroES, plays an essential role in assisting protein folding. The GroEL-GroES system forms a nano-cage that allows encapsulation of the non-native substrate proteins and provides a physical environment optimized to promote and accelerate protein folding. This Mycolicibacterium smegmatis (Mycobacterium smegmatis) protein is Chaperonin GroEL.